Reading from the N-terminus, the 91-residue chain is Putative 26S proteasome complex subunit sem-1 (91 aa).

The interval 1-73 (MASTQPKNDA…SWDDDDTSDD (73 aa)) is disordered. Basic and acidic residues predominate over residues 8 to 28 (NDAKSTEPKPEQPVTEKKTAV). 2 stretches are compositionally biased toward acidic residues: residues 29 to 48 (LEED…AEDT) and 63 to 72 (ESWDDDDTSD).

This sequence belongs to the DSS1/SEM1 family. Part of the 26S proteasome.

Its function is as follows. Subunit of the 26S proteasome which plays a role in ubiquitin-dependent proteolysis. This is Putative 26S proteasome complex subunit sem-1 (sem-1) from Neurospora crassa (strain ATCC 24698 / 74-OR23-1A / CBS 708.71 / DSM 1257 / FGSC 987).